The primary structure comprises 115 residues: Large ribosomal subunit protein bL19 (115 aa).

It belongs to the bacterial ribosomal protein bL19 family.

Functionally, this protein is located at the 30S-50S ribosomal subunit interface and may play a role in the structure and function of the aminoacyl-tRNA binding site. The chain is Large ribosomal subunit protein bL19 from Escherichia coli O139:H28 (strain E24377A / ETEC).